The chain runs to 350 residues: MTTESYTIKIRRPDDWHIHFRDGEMLRTVVPYTSHYFGRAIVMPNLLTPITEVVSAKAYRGRILAAIPEGDNFQPLMTCYLTDTTESSQIEIGYKEGIFTACKLYPANATTNSSHGVSDIKNIYPLLAVMEKLGMPLLVHGEVTASHIDIFDREARFIEQVMEPLRNQFPALKVVFEHITTKEAAQYVLEGNNNLAATLTPQHLMFNRNHMLVGGIRPHLYCLPVLKRNVHQEALRAAVASGCDRFFLGTDSAPHAQQKKESSCGCAGVFNAPSALPAYATVFEEMNALPHFEAFCSLNGPKFYGLPVNEGFIELTRKPSTVIEHIDCNNEKLIPFLAGEDARWDVKVTD.

Residues His-17 and His-19 each contribute to the Zn(2+) site. Substrate contacts are provided by residues His-19–Arg-21 and Asn-45. Residues Lys-103, His-140, and His-178 each coordinate Zn(2+). Residue Lys-103 is modified to N6-carboxylysine. Residue His-140 participates in substrate binding. Leu-223 contributes to the substrate binding site. Zn(2+) is bound at residue Asp-251. Residue Asp-251 is part of the active site. 2 residues coordinate substrate: His-255 and Ala-267.

This sequence belongs to the metallo-dependent hydrolases superfamily. DHOase family. Class II DHOase subfamily. As to quaternary structure, homodimer. Zn(2+) serves as cofactor.

It carries out the reaction (S)-dihydroorotate + H2O = N-carbamoyl-L-aspartate + H(+). Its pathway is pyrimidine metabolism; UMP biosynthesis via de novo pathway; (S)-dihydroorotate from bicarbonate: step 3/3. Its function is as follows. Catalyzes the reversible cyclization of carbamoyl aspartate to dihydroorotate. The protein is Dihydroorotase of Photorhabdus laumondii subsp. laumondii (strain DSM 15139 / CIP 105565 / TT01) (Photorhabdus luminescens subsp. laumondii).